Consider the following 100-residue polypeptide: Small ribosomal subunit protein uS14c (100 aa).

The protein belongs to the universal ribosomal protein uS14 family. In terms of assembly, part of the 30S ribosomal subunit.

It localises to the plastid. The protein localises to the chloroplast. Functionally, binds 16S rRNA, required for the assembly of 30S particles. This Oedogonium cardiacum (Filamentous green alga) protein is Small ribosomal subunit protein uS14c.